We begin with the raw amino-acid sequence, 274 residues long: Diaminopimelate epimerase (274 aa).

3 residues coordinate substrate: asparagine 11, glutamine 44, and asparagine 64. Cysteine 73 serves as the catalytic Proton donor. Substrate-binding positions include 74-75 (GN), asparagine 157, asparagine 190, and 208-209 (ER). The active-site Proton acceptor is cysteine 217. Position 218–219 (218–219 (GS)) interacts with substrate.

Belongs to the diaminopimelate epimerase family. As to quaternary structure, homodimer.

The protein resides in the cytoplasm. The enzyme catalyses (2S,6S)-2,6-diaminopimelate = meso-2,6-diaminopimelate. It participates in amino-acid biosynthesis; L-lysine biosynthesis via DAP pathway; DL-2,6-diaminopimelate from LL-2,6-diaminopimelate: step 1/1. Functionally, catalyzes the stereoinversion of LL-2,6-diaminopimelate (L,L-DAP) to meso-diaminopimelate (meso-DAP), a precursor of L-lysine and an essential component of the bacterial peptidoglycan. The protein is Diaminopimelate epimerase of Shigella flexneri serotype 5b (strain 8401).